The following is an 81-amino-acid chain: ATP synthase subunit c, chloroplastic (81 aa).

The next 2 helical transmembrane spans lie at 3-23 (PLVF…ASIG) and 57-77 (LAFM…LLFA).

Belongs to the ATPase C chain family. As to quaternary structure, F-type ATPases have 2 components, F(1) - the catalytic core - and F(0) - the membrane proton channel. F(1) has five subunits: alpha(3), beta(3), gamma(1), delta(1), epsilon(1). F(0) has four main subunits: a(1), b(1), b'(1) and c(10-14). The alpha and beta chains form an alternating ring which encloses part of the gamma chain. F(1) is attached to F(0) by a central stalk formed by the gamma and epsilon chains, while a peripheral stalk is formed by the delta, b and b' chains.

It is found in the plastid. Its subcellular location is the chloroplast thylakoid membrane. Its function is as follows. F(1)F(0) ATP synthase produces ATP from ADP in the presence of a proton or sodium gradient. F-type ATPases consist of two structural domains, F(1) containing the extramembraneous catalytic core and F(0) containing the membrane proton channel, linked together by a central stalk and a peripheral stalk. During catalysis, ATP synthesis in the catalytic domain of F(1) is coupled via a rotary mechanism of the central stalk subunits to proton translocation. In terms of biological role, key component of the F(0) channel; it plays a direct role in translocation across the membrane. A homomeric c-ring of between 10-14 subunits forms the central stalk rotor element with the F(1) delta and epsilon subunits. This Atropa belladonna (Belladonna) protein is ATP synthase subunit c, chloroplastic.